Here is a 167-residue protein sequence, read N- to C-terminus: NADH-ubiquinone oxidoreductase chain 6 (167 aa).

4 helical membrane-spanning segments follow: residues 24–44, 54–74, 85–105, and 135–155; these read PYFG…IILA, LLLI…ALVL, VLMK…GGYL, and WLLI…ILEI.

This sequence belongs to the complex I subunit 6 family.

It is found in the mitochondrion membrane. The catalysed reaction is a ubiquinone + NADH + 5 H(+)(in) = a ubiquinol + NAD(+) + 4 H(+)(out). Functionally, core subunit of the mitochondrial membrane respiratory chain NADH dehydrogenase (Complex I) that is believed to belong to the minimal assembly required for catalysis. Complex I functions in the transfer of electrons from NADH to the respiratory chain. The immediate electron acceptor for the enzyme is believed to be ubiquinone. In Myxine glutinosa (Atlantic hagfish), this protein is NADH-ubiquinone oxidoreductase chain 6 (MT-ND6).